Reading from the N-terminus, the 106-residue chain is UPF0060 membrane protein CHU_3331 (106 aa).

4 helical membrane-spanning segments follow: residues 5-25, 31-51, 59-79, and 85-105; these read FYFILAAFCEISGCYLFWLHF, ALLLLPAAACLLVFAYLLTKI, AYAVYGGIYIVCSLAWMYGIE, and IWDYIGVGICLIGASVILFAP.

Belongs to the UPF0060 family.

It localises to the cell inner membrane. The polypeptide is UPF0060 membrane protein CHU_3331 (Cytophaga hutchinsonii (strain ATCC 33406 / DSM 1761 / CIP 103989 / NBRC 15051 / NCIMB 9469 / D465)).